The chain runs to 76 residues: Sec-independent protein translocase protein TatA (76 aa).

The chain crosses the membrane as a helical span at residues 1 to 21 (MGGISIWQLLIIALIVVLLFG). Positions 43–76 (MSSEDEKKAIEDTSAEKTAQTEEKKTESKDKEQA) are disordered. A compositionally biased stretch (basic and acidic residues) spans 46–76 (EDEKKAIEDTSAEKTAQTEEKKTESKDKEQA).

This sequence belongs to the TatA/E family. As to quaternary structure, the Tat system comprises two distinct complexes: a TatABC complex, containing multiple copies of TatA, TatB and TatC subunits, and a separate TatA complex, containing only TatA subunits. Substrates initially bind to the TatABC complex, which probably triggers association of the separate TatA complex to form the active translocon.

The protein resides in the cell inner membrane. In terms of biological role, part of the twin-arginine translocation (Tat) system that transports large folded proteins containing a characteristic twin-arginine motif in their signal peptide across membranes. TatA could form the protein-conducting channel of the Tat system. The sequence is that of Sec-independent protein translocase protein TatA from Shewanella loihica (strain ATCC BAA-1088 / PV-4).